We begin with the raw amino-acid sequence, 253 residues long: UPF0758 protein Bxeno_A3578 (253 aa).

The MPN domain occupies Leu-131–Pro-253. Residues His-202, His-204, and Asp-215 each contribute to the Zn(2+) site. A JAMM motif motif is present at residues His-202–Asp-215.

This sequence belongs to the UPF0758 family.

The sequence is that of UPF0758 protein Bxeno_A3578 from Paraburkholderia xenovorans (strain LB400).